A 307-amino-acid polypeptide reads, in one-letter code: Pyridoxal 5'-phosphate synthase subunit PdxS (307 aa).

Positions M1–R10 are enriched in basic residues. Residues M1–P20 are disordered. D-ribose 5-phosphate is bound at residue D37. K94 serves as the catalytic Schiff-base intermediate with D-ribose 5-phosphate. Residue G166 participates in D-ribose 5-phosphate binding. R178 is a binding site for D-glyceraldehyde 3-phosphate. D-ribose 5-phosphate contacts are provided by residues G227 and G248 to S249.

Belongs to the PdxS/SNZ family. In the presence of PdxT, forms a dodecamer of heterodimers.

It carries out the reaction aldehydo-D-ribose 5-phosphate + D-glyceraldehyde 3-phosphate + L-glutamine = pyridoxal 5'-phosphate + L-glutamate + phosphate + 3 H2O + H(+). Its pathway is cofactor biosynthesis; pyridoxal 5'-phosphate biosynthesis. In terms of biological role, catalyzes the formation of pyridoxal 5'-phosphate from ribose 5-phosphate (RBP), glyceraldehyde 3-phosphate (G3P) and ammonia. The ammonia is provided by the PdxT subunit. Can also use ribulose 5-phosphate and dihydroxyacetone phosphate as substrates, resulting from enzyme-catalyzed isomerization of RBP and G3P, respectively. The chain is Pyridoxal 5'-phosphate synthase subunit PdxS from Deinococcus radiodurans (strain ATCC 13939 / DSM 20539 / JCM 16871 / CCUG 27074 / LMG 4051 / NBRC 15346 / NCIMB 9279 / VKM B-1422 / R1).